The following is a 382-amino-acid chain: Cytochrome c biogenesis CcmF N-terminal-like mitochondrial protein 1 (382 aa).

The next 4 membrane-spanning stretches (helical) occupy residues 1-21, 30-50, 79-99, and 117-137; these read MSIS…FVAF, AFGA…LLFC, HEGS…FFCY, and SLFF…LLRY.

This sequence belongs to the CcmF/CycK/Ccl1/NrfE/CcsA family. Interacts with CCMFN2 and CCMH.

The protein localises to the mitochondrion inner membrane. In terms of biological role, forms a complex with CCMFC, CCMFN2 and CCMH that performs the assembly of heme with c-type apocytochromes in mitochondria. The sequence is that of Cytochrome c biogenesis CcmF N-terminal-like mitochondrial protein 1 from Arabidopsis thaliana (Mouse-ear cress).